The chain runs to 348 residues: L-threonine 3-dehydrogenase (348 aa).

A Zn(2+)-binding site is contributed by Cys-42. Active-site charge relay system residues include Thr-44 and His-47. Zn(2+)-binding residues include His-67, Glu-68, Cys-97, Cys-100, Cys-103, and Cys-111. NAD(+)-binding positions include Leu-179, Glu-199, Arg-204, 266-268, and 291-292; these read LGL and IT.

The protein belongs to the zinc-containing alcohol dehydrogenase family. Homotetramer. Requires Zn(2+) as cofactor.

The protein resides in the cytoplasm. The enzyme catalyses L-threonine + NAD(+) = (2S)-2-amino-3-oxobutanoate + NADH + H(+). Its pathway is amino-acid degradation; L-threonine degradation via oxydo-reductase pathway; glycine from L-threonine: step 1/2. Its function is as follows. Catalyzes the NAD(+)-dependent oxidation of L-threonine to 2-amino-3-ketobutyrate. This chain is L-threonine 3-dehydrogenase, found in Pyrococcus abyssi (strain GE5 / Orsay).